The primary structure comprises 366 residues: Pyruvate dehydrogenase E1 component subunit beta, mitochondrial (366 aa).

Residues 1–33 constitute a mitochondrion transit peptide; that stretch reads MFSRLPTSLARNVARRAPTSFVRPSAAAAALRF. E95 provides a ligand contact to thiamine diphosphate. K(+) contacts are provided by A196, I197, D199, and N201.

Pyruvate dehydrogenase (E1) is a tetramer of 2 alpha and 2 beta subunits. Eukaryotic pyruvate dehydrogenase (PDH) complexes are organized as a core consisting of the oligomeric dihydrolipoamide acetyl-transferase (E2), around which are arranged multiple copies of pyruvate dehydrogenase (E1), dihydrolipoamide dehydrogenase (E3) and protein X (E3BP) bound by non-covalent bonds. Thiamine diphosphate serves as cofactor.

It is found in the mitochondrion matrix. The catalysed reaction is N(6)-[(R)-lipoyl]-L-lysyl-[protein] + pyruvate + H(+) = N(6)-[(R)-S(8)-acetyldihydrolipoyl]-L-lysyl-[protein] + CO2. The pyruvate dehydrogenase complex catalyzes the overall conversion of pyruvate to acetyl-CoA and CO(2). The protein is Pyruvate dehydrogenase E1 component subunit beta, mitochondrial (PDB1) of Saccharomyces cerevisiae (strain ATCC 204508 / S288c) (Baker's yeast).